The chain runs to 83 residues: Disintegrin isoform D-2 (83 aa).

Residues 2–83 (PPVCGNELLE…GKSSDCPWNH (82 aa)) form the Disintegrin domain. 7 cysteine pairs are disulfide-bonded: Cys-5-Cys-24, Cys-16-Cys-34, Cys-18-Cys-29, Cys-28-Cys-51, Cys-42-Cys-48, Cys-47-Cys-72, and Cys-60-Cys-79. The Cell attachment site signature appears at 64 to 66 (RGD).

Belongs to the venom metalloproteinase (M12B) family. P-II subfamily. P-IIa sub-subfamily. As to quaternary structure, monomer (disintegrin). As to expression, expressed by the venom gland.

The protein resides in the secreted. Its function is as follows. Inhibits fibrinogen interaction with platelets. Acts by binding to the alpha-IIb/beta-3 (ITGA2B/ITGB3) on the platelet surface and inhibits aggregation induced by ADP, thrombin, platelet-activating factor and collagen. This is Disintegrin isoform D-2 from Bitis arietans (African puff adder).